The sequence spans 218 residues: Thyroid hormone receptor alpha (218 aa).

The 215-residue stretch at 1-215 (PEDIGQSPGV…PPLFLEVFED (215 aa)) folds into the NR LBD domain. Arg-36 and Ser-85 together coordinate 3,3',5-triiodo-L-thyronine.

The protein belongs to the nuclear hormone receptor family. NR1 subfamily.

It localises to the nucleus. Nuclear hormone receptor that can act as a repressor or activator of transcription. High affinity receptor for thyroid hormones, including triiodothyronine and thyroxine. The sequence is that of Thyroid hormone receptor alpha (thra) from Oncorhynchus mykiss (Rainbow trout).